Consider the following 55-residue polypeptide: Probable Rubredoxin-2 (55 aa).

The Rubredoxin-like domain occupies 4-54 (MARYQCMCGWVYDEDKGEPSQNIPPGTKFEDLPDTFRCPQCGLGKNAFRKI). Fe cation is bound by residues cysteine 9, cysteine 11, cysteine 41, and cysteine 44.

The protein belongs to the rubredoxin family. It depends on Fe(3+) as a cofactor.

Rubredoxin is a small nonheme, iron protein lacking acid-labile sulfide. Its single Fe, chelated to 4 Cys, functions as an electron acceptor and may also stabilize the conformation of the molecule. This is Probable Rubredoxin-2 from Methanocaldococcus jannaschii (strain ATCC 43067 / DSM 2661 / JAL-1 / JCM 10045 / NBRC 100440) (Methanococcus jannaschii).